Here is a 416-residue protein sequence, read N- to C-terminus: Homogentisate 1,2-dioxygenase (416 aa).

Histidine 275 serves as the catalytic Proton acceptor. Fe cation is bound by residues histidine 318 and glutamate 324. Residues tyrosine 333 and histidine 354 each contribute to the homogentisate site. Histidine 354 contributes to the Fe cation binding site.

This sequence belongs to the homogentisate dioxygenase family. As to quaternary structure, hexamer; dimer of trimers. Fe cation is required as a cofactor.

It catalyses the reaction homogentisate + O2 = 4-maleylacetoacetate + H(+). It participates in amino-acid degradation; L-phenylalanine degradation; acetoacetate and fumarate from L-phenylalanine: step 4/6. In terms of biological role, involved in the catabolism of homogentisate (2,5-dihydroxyphenylacetate or 2,5-OH-PhAc), a central intermediate in the degradation of phenylalanine and tyrosine. Catalyzes the oxidative ring cleavage of the aromatic ring of homogentisate to yield maleylacetoacetate. In Legionella pneumophila (strain Lens), this protein is Homogentisate 1,2-dioxygenase.